The chain runs to 119 residues: Large ribosomal subunit protein bL20 (119 aa).

It belongs to the bacterial ribosomal protein bL20 family.

Its function is as follows. Binds directly to 23S ribosomal RNA and is necessary for the in vitro assembly process of the 50S ribosomal subunit. It is not involved in the protein synthesizing functions of that subunit. The chain is Large ribosomal subunit protein bL20 from Clostridium perfringens (strain ATCC 13124 / DSM 756 / JCM 1290 / NCIMB 6125 / NCTC 8237 / Type A).